Here is a 102-residue protein sequence, read N- to C-terminus: Small ribosomal subunit protein uS10 (102 aa).

The protein belongs to the universal ribosomal protein uS10 family. In terms of assembly, part of the 30S ribosomal subunit.

Functionally, involved in the binding of tRNA to the ribosomes. This is Small ribosomal subunit protein uS10 from Streptococcus pyogenes serotype M3 (strain SSI-1).